Consider the following 176-residue polypeptide: ATP-dependent protease subunit HslV (176 aa).

The active site involves threonine 2. The Na(+) site is built by glycine 157, cysteine 160, and threonine 163.

Belongs to the peptidase T1B family. HslV subfamily. As to quaternary structure, a double ring-shaped homohexamer of HslV is capped on each side by a ring-shaped HslU homohexamer. The assembly of the HslU/HslV complex is dependent on binding of ATP.

It is found in the cytoplasm. It catalyses the reaction ATP-dependent cleavage of peptide bonds with broad specificity.. With respect to regulation, allosterically activated by HslU binding. Its function is as follows. Protease subunit of a proteasome-like degradation complex believed to be a general protein degrading machinery. The sequence is that of ATP-dependent protease subunit HslV from Photorhabdus laumondii subsp. laumondii (strain DSM 15139 / CIP 105565 / TT01) (Photorhabdus luminescens subsp. laumondii).